The chain runs to 285 residues: HTH-type transcriptional regulator MurR (285 aa).

The HTH rpiR-type domain maps to 1–77 (MLYLTKIRNA…MALIGEYSAS (77 aa)). Positions 37 to 56 (SRKMAKQLGISQSSIVKFAQ) form a DNA-binding region, H-T-H motif. In terms of domain architecture, SIS spans 128–268 (IIEVISKAPF…FVGLVQLNDV (141 aa)).

In terms of assembly, homotetramer.

It functions in the pathway amino-sugar metabolism; N-acetylmuramate degradation [regulation]. Functionally, represses the expression of the murPQ operon involved in the uptake and degradation of N-acetylmuramic acid (MurNAc). Binds to two adjacent inverted repeats within the operator region. MurNAc 6-phosphate, the substrate of MurQ, is the specific inducer that weakens binding of MurR to the operator. In Shigella sonnei (strain Ss046), this protein is HTH-type transcriptional regulator MurR.